A 320-amino-acid polypeptide reads, in one-letter code: Beta-ketoacyl-[acyl-carrier-protein] synthase III (320 aa).

Active-site residues include cysteine 112 and histidine 245. The segment at 246-250 (QANIR) is ACP-binding. Residue asparagine 275 is part of the active site.

The protein belongs to the thiolase-like superfamily. FabH family. As to quaternary structure, homodimer.

Its subcellular location is the cytoplasm. It catalyses the reaction malonyl-[ACP] + acetyl-CoA + H(+) = 3-oxobutanoyl-[ACP] + CO2 + CoA. It functions in the pathway lipid metabolism; fatty acid biosynthesis. Its function is as follows. Catalyzes the condensation reaction of fatty acid synthesis by the addition to an acyl acceptor of two carbons from malonyl-ACP. Catalyzes the first condensation reaction which initiates fatty acid synthesis and may therefore play a role in governing the total rate of fatty acid production. Possesses both acetoacetyl-ACP synthase and acetyl transacylase activities. Its substrate specificity determines the biosynthesis of branched-chain and/or straight-chain of fatty acids. The protein is Beta-ketoacyl-[acyl-carrier-protein] synthase III of Streptococcus thermophilus (strain ATCC BAA-250 / LMG 18311).